We begin with the raw amino-acid sequence, 670 residues long: MDSSGADLDRIEAQRSMLVSHDQRKDFSHSGGVGTTSPTGDTEPVPKFRTNLKLSDLFALPGEDVEMTPEIFGGMSNGEKECLEKLRSNGTPMERVKSNTGDSILHIAAKWGHLELVKEIIFECPCLLFEQNSSRQTPLHVATHGGHTKVVEALVASVTSALASLSTEESEGLNPHVLKDEDGNTALYYAIEGRYLEMATCLVNADKDAPFLGNNKGISSLYEAVDAGNKFEDLVKAILKTTDDNVDREVRKFNLDSKLQGNKHLAHVALKAKSIGVLDVILDEYPSLMDEQDEDGRTCLSYGASIGYYKGLCNILNRSTKGVYVCDQDGSFPIHSAAKNEHYEIIKEFIKRCPASKYLLNRLGQNILHVAAKNEASLTAYMLMHDKDTKHLGVGQDVDGNTPLHLAVMNWDFDSITCLASRNHEILKLRNKSGLRARDIAESEVKPNYIFHERWTLALLLYAIHSSGFESVKSLTIQSVPLDPKKNRHYVNALLVVAALVATVTFAAGFTIPGGYISDSKKPNLGRATLATNPTLFIFLLFDILAMQSSVATICTLIWAQLGDLALILKSLHVALPLLLFSLLCMPVAFLFGVITAIAHVKWLLVTISIISGGFFLFAIFILGPHVMLQRSHLPPSSGIFLKTFMLTIDISELFVILIKACFGCVACSE.

The Cytoplasmic segment spans residues 1 to 456 (MDSSGADLDR…PNYIFHERWT (456 aa)). The tract at residues 18 to 47 (LVSHDQRKDFSHSGGVGTTSPTGDTEPVPK) is disordered. ANK repeat units follow at residues 66–95 (EMTP…PMER), 100–129 (TGDS…CLLF), 134–163 (SRQT…SALA), 182–211 (DGNT…DAPF), 216–248 (KGIS…NVDR), 260–290 (QGNK…SLMD), 295–325 (DGRT…GVYV), 329–358 (DGSF…ASKY), 363–391 (LGQN…DTKH), and 399–428 (DGNT…EILK). The helical transmembrane segment at 457-477 (LALLLYAIHSSGFESVKSLTI) threads the bilayer. At 478–492 (QSVPLDPKKNRHYVN) the chain is on the extracellular side. The helical transmembrane segment at 493-513 (ALLVVAALVATVTFAAGFTIP) threads the bilayer. The Cytoplasmic portion of the chain corresponds to 514 to 537 (GGYISDSKKPNLGRATLATNPTLF). A helical transmembrane segment spans residues 538–558 (IFLLFDILAMQSSVATICTLI). The Extracellular portion of the chain corresponds to 559–577 (WAQLGDLALILKSLHVALP). The chain crosses the membrane as a helical span at residues 578 to 598 (LLLFSLLCMPVAFLFGVITAI). Over 599–602 (AHVK) the chain is Cytoplasmic. Residues 603–623 (WLLVTISIISGGFFLFAIFIL) traverse the membrane as a helical segment. Residues 624–638 (GPHVMLQRSHLPPSS) are Extracellular-facing. Residues 639 to 659 (GIFLKTFMLTIDISELFVILI) form a helical membrane-spanning segment. Over 660 to 670 (KACFGCVACSE) the chain is Cytoplasmic.

Component of large complexes containing, at least, FLS2, HSP70 and ACD6 in endoplasmic reticulum, plasma membrane and soluble fraction. Associated with HSP70 proteins during endoplasmic reticulum-associated degradation (ERAD). Reduced complex levels upon benzothiazole (BTH) treatment. In terms of processing, ubiquitinated. Basal expression requires light and salicylic acid (SA).

It localises to the cell membrane. It is found in the endoplasmic reticulum membrane. Functionally, dose-dependent activator of the defense response against virulent pathogens, including bacteria, fungi and oomycetes, that acts in a positive feedback loop with the defense signal salicylic acid (SA). Regulates the salicylic acid (SA) signaling pathway leading to cell death and modulating cell fate (e.g. cell enlargement and/or cell division). In response to SA signaling, triggers the accumulation of FLS2 at the plasma membrane, thus priming defenses. Involved in SA-dependent freezing signaling and tolerance. The sequence is that of Protein ACCELERATED CELL DEATH 6 from Arabidopsis thaliana (Mouse-ear cress).